The following is a 104-amino-acid chain: Transcription factor ILI1 (104 aa).

The span at 1-11 shows a compositional bias: basic residues; sequence MSSSRRSRSRR. The interval 1-27 is disordered; that stretch reads MSSSRRSRSRRAGSSVPSSSSSSRTSI. Over residues 12–27 the composition is skewed to low complexity; that stretch reads AGSSVPSSSSSSRTSI. A bHLH domain is found at 16–71; the sequence is VPSSSSSSRTSISEDQIAELLSKLQALLPESQARNGAHRGSAARVLQETCSYIRSL.

This sequence belongs to the bHLH protein family. In terms of assembly, interacts with IBH1.

In terms of biological role, atypical and probable non DNA-binding bHLH transcription factor that acts as a positive regulator of cell elongation and plant development. Binds the transcription repressor IBH1 and forms a heterodimer of antagonistic bHLH transcription factors that function downstream of BZR1 to mediate brassinosteroid regulation of cell elongation and lamina inclination. This Oryza sativa subsp. indica (Rice) protein is Transcription factor ILI1 (ILI1).